A 235-amino-acid polypeptide reads, in one-letter code: Large ribosomal subunit protein uL3 (235 aa).

It belongs to the universal ribosomal protein uL3 family. As to quaternary structure, part of the 50S ribosomal subunit. Forms a cluster with proteins L14 and L19.

In terms of biological role, one of the primary rRNA binding proteins, it binds directly near the 3'-end of the 23S rRNA, where it nucleates assembly of the 50S subunit. The sequence is that of Large ribosomal subunit protein uL3 from Frankia casuarinae (strain DSM 45818 / CECT 9043 / HFP020203 / CcI3).